The chain runs to 319 residues: Ribonucleoside-diphosphate reductase small chain (319 aa).

Residues Asp-70, Glu-101, and His-104 each contribute to the Fe cation site. Tyr-108 is an active-site residue. Fe cation is bound by residues Glu-163, Glu-197, and His-200. The tract at residues 313 to 319 is interaction with R1; it reads FSLDVDF.

This sequence belongs to the ribonucleoside diphosphate reductase small chain family. As to quaternary structure, interacts with RNR1/OPG080 subunit. Can interact with host RNR1 supunit. It depends on Fe cation as a cofactor.

The enzyme catalyses a 2'-deoxyribonucleoside 5'-diphosphate + [thioredoxin]-disulfide + H2O = a ribonucleoside 5'-diphosphate + [thioredoxin]-dithiol. Its function is as follows. Ribonucleoside-diphosphate reductase holoenzyme provides the precursors necessary for viral DNA synthesis. Allows virus growth in non-dividing cells. Catalyzes the biosynthesis of deoxyribonucleotides from the corresponding ribonucleotides. In Vaccinia virus (strain Ankara) (VACV), this protein is Ribonucleoside-diphosphate reductase small chain (OPG048).